Consider the following 643-residue polypeptide: Versicolorin B synthase (643 aa).

A propeptide spanning residues 1 to 41 is cleaved from the precursor; that stretch reads MGRNWFQVTAMAVVPVVGIMAAVNPTILSSAASSLPSLGAM. FAD-binding positions include 84 to 85 and 105 to 106; these read TA and EA. Asparagine 116 carries an N-linked (GlcNAc...) asparagine glycan. Residue 171–174 coordinates FAD; the sequence is GAML. 2 N-linked (GlcNAc...) asparagine glycosylation sites follow: asparagine 221 and asparagine 507. FAD-binding positions include alanine 613 and 624–625; that span reads PM.

The protein belongs to the GMC oxidoreductase family. As to quaternary structure, homodimer. Requires FAD as cofactor. In terms of processing, N-glycosylated.

Its subcellular location is the cytoplasm. The protein localises to the cytosol. The enzyme catalyses (2S-3S)-versiconal hemiacetal = versicolorin B + H2O. It carries out the reaction (S)-5'-oxoaverantin + H(+) = (1'S,5'S)-averufin + H2O. The protein operates within mycotoxin biosynthesis; aflatoxin biosynthesis. In terms of biological role, dual cyclase; part of the gene cluster that mediates the biosynthesis of aflatoxins, a group of polyketide-derived furanocoumarins, and part of the most toxic and carcinogenic compounds among the known mycotoxins. The four major aflatoxins produced by A.parasiticus are aflatoxin B1 (AFB1), aflatoxin B2 (AFB2), aflatoxin G1 (AFG1) and aflatoxin G2 (AFG2). Aflk plays a dual role within the aflatoxin pathway, as a 5'-oxoaverantin cyclase that mediates conversion of 5'-oxoaverantin (OAVN) to averufin (AVF), as well as a versicolorin B synthase that converts versiconal (VAL) to versicolorin B (VERB) by closing the bisfuran ring of aflatoxin which is required for DNA-binding, thus giving to aflatoxin its activity as a mutagen. The biosynthesis of aflatoxins begins with the norsolorinic acid synthase aflC that combines a hexanoyl starter unit produced by the fatty acid synthase aflA/aflB and 7 malonyl-CoA extender units to synthesize the precursor NOR. The second step is the conversion of NOR to averantin and requires the norsolorinic acid ketoreductase aflD, which catalyzes the dehydration of norsolorinic acid to form (1'S)-averantin. The norsolorinic acid reductases aflE and aflF may also play a role in the conversion of NOR to AVN. The cytochrome P450 monooxygenase aflG then catalyzes the hydroxylation of AVN to 5'hydroxyaverantin (HAVN). The next step is performed by the 5'-hydroxyaverantin dehydrogenase aflH that transforms HAVN to 5'-oxoaverantin (OAVN) which is further converted to averufin (AVF) by aflK that plays a dual role in the pathway, as a 5'-oxoaverantin cyclase that mediates conversion of 5'-oxoaverantin, as well as a versicolorin B synthase in a later step in the pathway. The averufin oxidase aflI catalyzes the conversion of AVF to versiconal hemiacetal acetate (VHA). VHA is then the substrate for the versiconal hemiacetal acetate esterase aflJ to yield versiconal (VAL). Versicolorin B synthase aflK then converts VAL to versicolorin B (VERB) by closing the bisfuran ring of aflatoxin which is required for DNA-binding, thus giving to aflatoxin its activity as a mutagen. Then, the activity of the versicolorin B desaturase aflL leads to versicolorin A (VERA). A branch point starts from VERB since it can also be converted to dihydrodemethylsterigmatocystin (DMDHST), probably also by aflL, VERA being a precursor for aflatoxins B1 and G1, and DMDHST for aflatoxins B2 and G2. Next, the versicolorin reductase aflM and the cytochrome P450 monooxygenase aflN are involved in conversion of VERA to demethylsterigmatocystin (DMST). AflX and aflY seem also involved in this step, through probable aflX-mediated epoxide ring-opening step following versicolorin A oxidation and aflY-mediated Baeyer-Villiger oxidation required for the formation of the xanthone ring. The methyltransferase aflO then leads to the modification of DMST to sterigmatocystin (ST), and of DMDHST to dihydrosterigmatocystin (DHST). Both ST and DHST are then substrates of the O-methyltransferase aflP to yield O-methylsterigmatocystin (OMST) and dihydro-O-methylsterigmatocystin (DHOMST), respectively. Finally OMST is converted to aflatoxins B1 and G1, and DHOMST to aflatoxins B2 and G2, via the action of several enzymes including O-methylsterigmatocystin oxidoreductase aflQ, the cytochrome P450 monooxygenase aflU, but also the NADH-dependent flavin oxidoreductase nadA which is specifically required for the synthesis of AFG1. This chain is Versicolorin B synthase, found in Aspergillus parasiticus (strain ATCC 56775 / NRRL 5862 / SRRC 143 / SU-1).